We begin with the raw amino-acid sequence, 702 residues long: Elongation factor G (702 aa).

A tr-type G domain is found at glutamate 8–valine 290. GTP-binding positions include alanine 17–threonine 24, aspartate 88–histidine 92, and asparagine 142–aspartate 145.

Belongs to the TRAFAC class translation factor GTPase superfamily. Classic translation factor GTPase family. EF-G/EF-2 subfamily.

The protein resides in the cytoplasm. Catalyzes the GTP-dependent ribosomal translocation step during translation elongation. During this step, the ribosome changes from the pre-translocational (PRE) to the post-translocational (POST) state as the newly formed A-site-bound peptidyl-tRNA and P-site-bound deacylated tRNA move to the P and E sites, respectively. Catalyzes the coordinated movement of the two tRNA molecules, the mRNA and conformational changes in the ribosome. The polypeptide is Elongation factor G (Acidovorax ebreus (strain TPSY) (Diaphorobacter sp. (strain TPSY))).